Consider the following 204-residue polypeptide: Per os infectivity factor 3 (204 aa).

In terms of assembly, forms the PIF complex together with PIF1 and PIF2. The complex also interacts with per os infectivity factor PIF0.

Per os factor that plays a role in the initiation of host midgut infection. Unlike PIF1 and PIF2, PIF3 is not involved in specific binding of occluded virions (ODV) to the host midgut target cells. The polypeptide is Per os infectivity factor 3 (AC115) (Lepidoptera (butterflies and moths)).